A 98-amino-acid polypeptide reads, in one-letter code: NADH-ubiquinone oxidoreductase chain 4L (98 aa).

The next 3 helical transmembrane spans lie at 1–21 (MIPT…GMLT), 27–47 (VASL…ATLI), and 61–81 (IILL…LISI).

It belongs to the complex I subunit 4L family. As to quaternary structure, core subunit of respiratory chain NADH dehydrogenase (Complex I) which is composed of 45 different subunits.

Its subcellular location is the mitochondrion inner membrane. It carries out the reaction a ubiquinone + NADH + 5 H(+)(in) = a ubiquinol + NAD(+) + 4 H(+)(out). In terms of biological role, core subunit of the mitochondrial membrane respiratory chain NADH dehydrogenase (Complex I) which catalyzes electron transfer from NADH through the respiratory chain, using ubiquinone as an electron acceptor. Part of the enzyme membrane arm which is embedded in the lipid bilayer and involved in proton translocation. The chain is NADH-ubiquinone oxidoreductase chain 4L (MT-ND4L) from Macaca hecki (Heck's macaque).